Reading from the N-terminus, the 485-residue chain is Chitin synthase regulator 2 (485 aa).

Sel1-like repeat units follow at residues 164 to 202, 203 to 238, 239 to 275, 279 to 316, 317 to 353, 354 to 391, and 392 to 427; these read PDAQYFLADCYANGIGTARGKQDFDRAFPLFILAAKHGH, PDACYRAGTCCEHGWGCRRDSAKAVSFYKKAAVGLH, PGAMYRLGTAELNGALGFPRRPKEGVKWLKRSAEHAT, PHALHELALLHERGIENVVFVDNDYAAELLAQSAELGY, APSAFKLGECYEYGKMGCPVDPALSIHYYNISAQQDH, KDACFALTAWYLVGSPGVLPQSDTEAYLWAKKAAELGL, and AKAQYAVGYFTETGIGIEANPQAALTWYKQAAEGGD. Residues 460 to 485 are disordered; that stretch reads AANLAQRSGSGSGASGKDGKDGCLIM. Positions 476–485 are enriched in basic and acidic residues; it reads KDGKDGCLIM. Position 482 is a cysteine methyl ester (cysteine 482). Cysteine 482 is lipidated: S-farnesyl cysteine. The propeptide at 483–485 is removed in mature form; that stretch reads LIM.

This sequence belongs to the SKT5 family.

It localises to the cell membrane. Its function is as follows. Activator of the chitin synthase CHS3 which polymerizes chitin, a structural polymer of the fungal cell wall. Chitin produced by CHS3 is deacetylated to chitosan, which helps to maintain cell wall integrity, anchor melanin, and offers an advantage during infection, as chitosan is less readily detected by host immunosurveillance. This Cryptococcus neoformans var. grubii serotype A (strain H99 / ATCC 208821 / CBS 10515 / FGSC 9487) (Filobasidiella neoformans var. grubii) protein is Chitin synthase regulator 2.